Here is a 105-residue protein sequence, read N- to C-terminus: Large ribosomal subunit protein eL36 (105 aa).

Residues 1-20 are disordered; that stretch reads MAKEAPAKTGLAVGLNKGHK.

Belongs to the eukaryotic ribosomal protein eL36 family.

The sequence is that of Large ribosomal subunit protein eL36 (rpl36) from Trichoderma hamatum.